The sequence spans 182 residues: Protein GrpE (182 aa).

Positions 1-35 (MTQENQTPPPEQENLAADPAVETTAETPAVKTPEQ) are disordered.

This sequence belongs to the GrpE family. As to quaternary structure, homodimer.

Its subcellular location is the cytoplasm. Functionally, participates actively in the response to hyperosmotic and heat shock by preventing the aggregation of stress-denatured proteins, in association with DnaK and GrpE. It is the nucleotide exchange factor for DnaK and may function as a thermosensor. Unfolded proteins bind initially to DnaJ; upon interaction with the DnaJ-bound protein, DnaK hydrolyzes its bound ATP, resulting in the formation of a stable complex. GrpE releases ADP from DnaK; ATP binding to DnaK triggers the release of the substrate protein, thus completing the reaction cycle. Several rounds of ATP-dependent interactions between DnaJ, DnaK and GrpE are required for fully efficient folding. The sequence is that of Protein GrpE from Polynucleobacter necessarius subsp. necessarius (strain STIR1).